A 312-amino-acid polypeptide reads, in one-letter code: Ornithine carbamoyltransferase (312 aa).

Carbamoyl phosphate is bound by residues 50–53 (STRT), Gln77, Arg101, and 128–131 (HPCQ). Residues Asn160, Asp224, and 228 to 229 (SM) each bind L-ornithine. Residues 264–265 (CL) and Arg292 contribute to the carbamoyl phosphate site.

The protein belongs to the aspartate/ornithine carbamoyltransferase superfamily. OTCase family.

Its subcellular location is the cytoplasm. The enzyme catalyses carbamoyl phosphate + L-ornithine = L-citrulline + phosphate + H(+). It participates in amino-acid biosynthesis; L-arginine biosynthesis; L-arginine from L-ornithine and carbamoyl phosphate: step 1/3. Functionally, reversibly catalyzes the transfer of the carbamoyl group from carbamoyl phosphate (CP) to the N(epsilon) atom of ornithine (ORN) to produce L-citrulline. This is Ornithine carbamoyltransferase from Leifsonia xyli subsp. xyli (strain CTCB07).